The primary structure comprises 373 residues: MFISEIQLKNYRNYEDLNLSFEDKVNVIIGENAQGKTNLMEAIYVLAMAKSHRTSNDRELIRWDEDYGKIKGRLQKRNSSVSLELNISKKGKKAKLNELEQQKLSQYIGEMNVVMFAPEDLNLVKGSPQVRRRFLDMELGQIAPVYLYELSQYQKVLTQRNHLLKAMQGKNEETMLDVFTLQLIEHGTKILQKRFEFLHLLQEWAAPIHRGISRGLEELEIVYKPSVDVSESMDLSKIKEVYYESFQSVKQREIFRGTTLIGPHRDDLQFFVNSKNVQVFGSQGQQRTTALSLKLAEIELIYAEVKEYPILLLDDVLSELDDYRQSHLLNTIQGKVQTFVTTTSVDGIEHETLKKAKTIHVKSGTVDCEIDRI.

30 to 37 lines the ATP pocket; sequence GENAQGKT.

Belongs to the RecF family.

The protein resides in the cytoplasm. The RecF protein is involved in DNA metabolism; it is required for DNA replication and normal SOS inducibility. RecF binds preferentially to single-stranded, linear DNA. It also seems to bind ATP. This Bacillus cytotoxicus (strain DSM 22905 / CIP 110041 / 391-98 / NVH 391-98) protein is DNA replication and repair protein RecF.